The chain runs to 228 residues: Protein CWC15 homolog A (228 aa).

The tract at residues 1–126 (MTTAARPTFE…DEDSDDDTAA (126 aa)) is disordered. A compositionally biased stretch (polar residues) spans 24–34 (SQLSKQYSSRD). Basic and acidic residues predominate over residues 52–84 (EEVRSRDFRRELEERERVVARDKNRDRPTREHT). Positions 102–124 (DADDPLTDEDGDEDSDEDSDDDT) are enriched in acidic residues. Positions 121–165 (DDDTAALLAELEKIKKERAEEKDRKELEQKAEEERIRMENILSGN) form a coiled coil.

This sequence belongs to the CWC15 family. Identified in the spliceosome C complex. Component of the minor spliceosome, which splices U12-type introns.

Its subcellular location is the nucleus. Its function is as follows. Involved in pre-mRNA splicing as component of the spliceosome. In Xenopus laevis (African clawed frog), this protein is Protein CWC15 homolog A (cwc15-a).